A 686-amino-acid polypeptide reads, in one-letter code: CAI-1 autoinducer sensor kinase/phosphatase CqsS (686 aa).

6 consecutive transmembrane segments (helical) span residues 21-41 (LVGW…EYWF), 47-64 (NLGL…LVFR), 77-97 (GYFL…MMLM), 100-120 (WSTI…LLVH), 124-144 (VMAL…YGLT), and 152-172 (IEWQ…LCFF). In terms of domain architecture, Histidine kinase spans 191–416 (GIAHEMRNPL…EFVLSFPRYD (226 aa)). Phosphohistidine; by autocatalysis is present on His-194. The 118-residue stretch at 569–686 (RILVVDDNQS…VLLNKVAAWV (118 aa)) folds into the Response regulatory domain. 4-aspartylphosphate is present on Asp-618.

It localises to the cell membrane. The enzyme catalyses ATP + protein L-histidine = ADP + protein N-phospho-L-histidine.. In terms of biological role, senses the quorum-sensing autoinducer CAI-1 ((S)-3-hydroxytridecan-4-one) which probably functions as an intragenus signal. The sensory signal is then relayed to LuxU and LuxO. This chain is CAI-1 autoinducer sensor kinase/phosphatase CqsS (cqsS), found in Vibrio cholerae serotype O1 (strain ATCC 39315 / El Tor Inaba N16961).